Here is a 436-residue protein sequence, read N- to C-terminus: MKKNVIAIIGKPNVGKSTLFNRLVGKRSSITFDRPGVTRDRLYESFTWNGKEINVIDTGGIQIEKKDFQDQILIQAKIAIEEANVVIFIVDGQAAITSDDKMIYSMLQKSGKPIIVVANKLDNISKFDYGWYSLGADHVFRISALHGNGIGDVLDQCLKYLNFDSDNVSPYFKLSIIGQPNSGKSSLLNAITHENRSIVSDIAGTTRDGVKSVVELRGHKIEIIDTAGITRKSKIDDTVEHLALKRAMSSLDESDLSIVLINSTRELAHFDARIIGYALENNKPIIICVNKWDLINKTQDTMNEYRKKLKNRFHFVPWVPVEFISAKTGSRIDKLIDIVLKVKENLEREIKPSVLTNLIRESQLIQPAPPYNGGRLNIYFARKTENKIPTFIFFVNNKKFVHFSYQRFLEKQIRQNIEYTGCPINIIFKNKSNEFE.

EngA-type G domains follow at residues 4-165 (NVIA…NFDS) and 172-347 (FKLS…ENLE). GTP contacts are provided by residues 10-17 (GKPNVGKS), 57-61 (DTGGI), 119-122 (NKLD), 178-185 (GQPNSGKS), 225-229 (DTAGI), and 290-293 (NKWD). The region spanning 348–432 (REIKPSVLTN…PINIIFKNKS (85 aa)) is the KH-like domain.

It belongs to the TRAFAC class TrmE-Era-EngA-EngB-Septin-like GTPase superfamily. EngA (Der) GTPase family. As to quaternary structure, associates with the 50S ribosomal subunit.

GTPase that plays an essential role in the late steps of ribosome biogenesis. This Mycoplasmopsis agalactiae (strain NCTC 10123 / CIP 59.7 / PG2) (Mycoplasma agalactiae) protein is GTPase Der.